The primary structure comprises 525 residues: Bifunctional purine biosynthesis protein PurH (525 aa).

In terms of domain architecture, MGS-like spans 10–156; the sequence is HRIPIRRALV…KNHPSVAIVT (147 aa).

Belongs to the PurH family.

The enzyme catalyses (6R)-10-formyltetrahydrofolate + 5-amino-1-(5-phospho-beta-D-ribosyl)imidazole-4-carboxamide = 5-formamido-1-(5-phospho-D-ribosyl)imidazole-4-carboxamide + (6S)-5,6,7,8-tetrahydrofolate. It carries out the reaction IMP + H2O = 5-formamido-1-(5-phospho-D-ribosyl)imidazole-4-carboxamide. Its pathway is purine metabolism; IMP biosynthesis via de novo pathway; 5-formamido-1-(5-phospho-D-ribosyl)imidazole-4-carboxamide from 5-amino-1-(5-phospho-D-ribosyl)imidazole-4-carboxamide (10-formyl THF route): step 1/1. It participates in purine metabolism; IMP biosynthesis via de novo pathway; IMP from 5-formamido-1-(5-phospho-D-ribosyl)imidazole-4-carboxamide: step 1/1. This is Bifunctional purine biosynthesis protein PurH from Nocardioides sp. (strain ATCC BAA-499 / JS614).